Reading from the N-terminus, the 89-residue chain is Small ribosomal subunit protein uS15 (89 aa).

This sequence belongs to the universal ribosomal protein uS15 family. As to quaternary structure, part of the 30S ribosomal subunit. Forms a bridge to the 50S subunit in the 70S ribosome, contacting the 23S rRNA.

Its function is as follows. One of the primary rRNA binding proteins, it binds directly to 16S rRNA where it helps nucleate assembly of the platform of the 30S subunit by binding and bridging several RNA helices of the 16S rRNA. Forms an intersubunit bridge (bridge B4) with the 23S rRNA of the 50S subunit in the ribosome. The polypeptide is Small ribosomal subunit protein uS15 (Ralstonia nicotianae (strain ATCC BAA-1114 / GMI1000) (Ralstonia solanacearum)).